Reading from the N-terminus, the 143-residue chain is Large-conductance mechanosensitive channel (143 aa).

The next 2 helical transmembrane spans lie at 19–39 (VGVI…GDLI) and 81–101 (GSFL…FGVI).

Belongs to the MscL family. In terms of assembly, homopentamer.

It is found in the cell inner membrane. Channel that opens in response to stretch forces in the membrane lipid bilayer. May participate in the regulation of osmotic pressure changes within the cell. This Rhodopseudomonas palustris (strain BisB5) protein is Large-conductance mechanosensitive channel.